Here is a 156-residue protein sequence, read N- to C-terminus: Small ribosomal subunit protein uS7 (156 aa).

Belongs to the universal ribosomal protein uS7 family. Part of the 30S ribosomal subunit. Contacts proteins S9 and S11.

Its function is as follows. One of the primary rRNA binding proteins, it binds directly to 16S rRNA where it nucleates assembly of the head domain of the 30S subunit. Is located at the subunit interface close to the decoding center, probably blocks exit of the E-site tRNA. The polypeptide is Small ribosomal subunit protein uS7 (Lacticaseibacillus casei (strain BL23) (Lactobacillus casei)).